A 276-amino-acid polypeptide reads, in one-letter code: Protein G1 (276 aa).

Disordered regions lie at residues Met-1–Arg-30 and Ser-178–Pro-213. The span at Arg-21–Arg-30 shows a compositional bias: basic and acidic residues. Residues Arg-24–Lys-183 enclose the ALOG domain. A compositionally biased stretch (basic residues) spans Ser-178–Gly-187. Residues Lys-181–Arg-185 carry the Nuclear localization signal motif. Residues Asn-189 to Arg-202 show a composition bias toward gly residues. Residues Ala-203–Pro-213 are compositionally biased toward low complexity.

Belongs to the plant homeotic and developmental regulators ALOG protein family. As to expression, expressed at the empty glumes of immature spikelets, which are lemmas of the sterile florets located at the lateral side of the spikelet, throughout their development.

The protein resides in the nucleus. In terms of biological role, probable transcription regulator that acts as a developmental regulator by promoting cell growth in response to light. Transcription regulator that restrains empty glumes growth, lemmas of the sterile florets located at the lateral side of the rice spikelet, to maintain their small size, probably by repressing lemma identity via transcription regulation. This Oryza sativa subsp. japonica (Rice) protein is Protein G1 (G1).